The chain runs to 122 residues: Large ribosomal subunit protein uL14 (122 aa).

The protein belongs to the universal ribosomal protein uL14 family. As to quaternary structure, part of the 50S ribosomal subunit. Forms a cluster with proteins L3 and L19. In the 70S ribosome, L14 and L19 interact and together make contacts with the 16S rRNA in bridges B5 and B8.

Functionally, binds to 23S rRNA. Forms part of two intersubunit bridges in the 70S ribosome. This Heliobacterium modesticaldum (strain ATCC 51547 / Ice1) protein is Large ribosomal subunit protein uL14.